The chain runs to 203 residues: MSRYRGPRLKIIRRLKTLPGLTSKRPKNRKDSMNMNRSSSRKISQYRIRLEEKQKLRFHYGLTERQLLKYVRVSRRAKGSTGQVLLQLLEMRLDNIIFRLGMAPTIPGARQLVNHGHIRVNDHMVDIPSYPCKPQDVITIRDQPRLRAIIKKNIDLFQRDKLPNHLTFHPLQYKGFINQIIDSKWISLKINELLVVEYYSRQA.

Residues leucine 18 to lysine 42 are disordered. Positions methionine 33–lysine 42 are enriched in polar residues. Residues methionine 91 to lysine 152 enclose the S4 RNA-binding domain.

Belongs to the universal ribosomal protein uS4 family. Part of the 30S ribosomal subunit. Contacts protein S5. The interaction surface between S4 and S5 is involved in control of translational fidelity.

It is found in the plastid. The protein localises to the chloroplast. Its function is as follows. One of the primary rRNA binding proteins, it binds directly to 16S rRNA where it nucleates assembly of the body of the 30S subunit. In terms of biological role, with S5 and S12 plays an important role in translational accuracy. The protein is Small ribosomal subunit protein uS4c (rps4) of Pinus koraiensis (Korean pine).